Here is a 156-residue protein sequence, read N- to C-terminus: Phosphopantetheine adenylyltransferase (156 aa).

Threonine 10 serves as a coordination point for substrate. ATP is bound by residues 10-11 (TF) and histidine 18. Residues lysine 42, leucine 74, and arginine 88 each contribute to the substrate site. ATP is bound by residues 89–91 (GIR), glutamate 99, and 124–130 (WAFISSS).

Belongs to the bacterial CoaD family. As to quaternary structure, homohexamer. It depends on Mg(2+) as a cofactor.

The protein localises to the cytoplasm. It carries out the reaction (R)-4'-phosphopantetheine + ATP + H(+) = 3'-dephospho-CoA + diphosphate. It functions in the pathway cofactor biosynthesis; coenzyme A biosynthesis; CoA from (R)-pantothenate: step 4/5. Functionally, reversibly transfers an adenylyl group from ATP to 4'-phosphopantetheine, yielding dephospho-CoA (dPCoA) and pyrophosphate. The sequence is that of Phosphopantetheine adenylyltransferase from Hamiltonella defensa subsp. Acyrthosiphon pisum (strain 5AT).